A 34-amino-acid chain; its full sequence is Photosystem II reaction center protein Psb30 (34 aa).

Residues 9-29 (QLIATGTIMLAGPAVIVLLAL) traverse the membrane as a helical segment.

This sequence belongs to the Psb30/Ycf12 family. PSII is composed of 1 copy each of membrane proteins PsbA, PsbB, PsbC, PsbD, PsbE, PsbF, PsbH, PsbI, PsbJ, PsbK, PsbL, PsbM, PsbT, PsbX, PsbY, PsbZ, Psb30/Ycf12, peripheral proteins of the oxygen-evolving complex and a large number of cofactors. It forms dimeric complexes.

It localises to the plastid. The protein localises to the chloroplast thylakoid membrane. Its function is as follows. A core subunit of photosystem II (PSII), probably helps stabilize the reaction center. The chain is Photosystem II reaction center protein Psb30 from Phaeodactylum tricornutum (strain CCAP 1055/1).